The chain runs to 314 residues: Mitochondrial RNA-splicing protein MRS3 (314 aa).

Solcar repeat units follow at residues 31–118 (APLY…CKKN), 128–210 (HHPF…STKF), and 217–310 (YNPL…AKHF). A run of 6 helical transmembrane segments spans residues 33–52 (LYHQ…SVMF), 93–112 (GVQS…FGTY), 130–149 (PFKT…ALMN), 185–204 (SYPT…FVIY), 219–238 (PLIH…AITT), and 285–298 (GWKP…PATA).

The protein belongs to the mitochondrial carrier (TC 2.A.29) family.

It is found in the mitochondrion inner membrane. Its function is as follows. MRS3 suppresses a mitochondrial splice defect in the first intron of the COB gene. It may act as a carrier, exerting its suppressor activity via modulation of solute concentrations in the mitochondrion (possibly of cations). This Saccharomyces cerevisiae (strain ATCC 204508 / S288c) (Baker's yeast) protein is Mitochondrial RNA-splicing protein MRS3 (MRS3).